A 124-amino-acid chain; its full sequence is Thioredoxin domain-containing protein C21C3.12c (124 aa).

One can recognise a Thioredoxin domain in the interval 37 to 124 (PWCPTVRAAL…ANKFSKFIDI (88 aa)). Cys39 serves as the catalytic Nucleophile.

This sequence belongs to the thioredoxin family.

It localises to the cytoplasm. Its subcellular location is the nucleus. The protein is Thioredoxin domain-containing protein C21C3.12c of Schizosaccharomyces pombe (strain 972 / ATCC 24843) (Fission yeast).